The sequence spans 318 residues: Protein-methionine-sulfoxide reductase catalytic subunit MsrP (318 aa).

Residues 1–40 (MNRFTRYDVTPEAIFNQRRQIIKAMGLGAAALSLPNIGFA) constitute a signal peptide (tat-type signal). Residues asparagine 72, 75–76 (YE), cysteine 130, threonine 165, asparagine 217, arginine 222, and 233–235 (SIK) each bind Mo-molybdopterin.

It belongs to the MsrP family. Heterodimer of a catalytic subunit (MsrP) and a heme-binding subunit (MsrQ). Mo-molybdopterin is required as a cofactor. Predicted to be exported by the Tat system. The position of the signal peptide cleavage has not been experimentally proven.

Its subcellular location is the periplasm. The enzyme catalyses L-methionyl-[protein] + a quinone + H2O = L-methionyl-(S)-S-oxide-[protein] + a quinol. It carries out the reaction L-methionyl-[protein] + a quinone + H2O = L-methionyl-(R)-S-oxide-[protein] + a quinol. Functionally, part of the MsrPQ system that repairs oxidized periplasmic proteins containing methionine sulfoxide residues (Met-O), using respiratory chain electrons. Thus protects these proteins from oxidative-stress damage caused by reactive species of oxygen and chlorine generated by the host defense mechanisms. MsrPQ is essential for the maintenance of envelope integrity under bleach stress, rescuing a wide series of structurally unrelated periplasmic proteins from methionine oxidation. The catalytic subunit MsrP is non-stereospecific, being able to reduce both (R-) and (S-) diastereoisomers of methionine sulfoxide. The protein is Protein-methionine-sulfoxide reductase catalytic subunit MsrP of Actinobacillus pleuropneumoniae serotype 5b (strain L20).